We begin with the raw amino-acid sequence, 447 residues long: Argininosuccinate synthase (447 aa).

ATP is bound by residues 17-25 (AFSGGLDTS) and A43. Residue Y99 participates in L-citrulline binding. G129 and T131 together coordinate ATP. 3 residues coordinate L-aspartate: T131, N135, and D136. N135 is a binding site for L-citrulline. D136 is an ATP binding site. Residues R139 and S192 each contribute to the L-citrulline site. Residue D194 coordinates ATP. Residues T201, E203, and E280 each coordinate L-citrulline.

Belongs to the argininosuccinate synthase family. Type 2 subfamily. As to quaternary structure, homotetramer.

The protein localises to the cytoplasm. It catalyses the reaction L-citrulline + L-aspartate + ATP = 2-(N(omega)-L-arginino)succinate + AMP + diphosphate + H(+). Its pathway is amino-acid biosynthesis; L-arginine biosynthesis; L-arginine from L-ornithine and carbamoyl phosphate: step 2/3. The polypeptide is Argininosuccinate synthase (argG) (Salmonella typhi).